The chain runs to 451 residues: Phosphoglucosamine mutase (451 aa).

Catalysis depends on Ser101, which acts as the Phosphoserine intermediate. Mg(2+) is bound by residues Ser101, Asp240, Asp242, and Asp244. Ser101 is modified (phosphoserine).

Belongs to the phosphohexose mutase family. It depends on Mg(2+) as a cofactor. Post-translationally, activated by phosphorylation.

It catalyses the reaction alpha-D-glucosamine 1-phosphate = D-glucosamine 6-phosphate. Its function is as follows. Catalyzes the conversion of glucosamine-6-phosphate to glucosamine-1-phosphate. This Alkalilimnicola ehrlichii (strain ATCC BAA-1101 / DSM 17681 / MLHE-1) protein is Phosphoglucosamine mutase.